A 545-amino-acid chain; its full sequence is GMP synthase [glutamine-hydrolyzing] (545 aa).

Residues 17 to 211 form the Glutamine amidotransferase type-1 domain; the sequence is TVLVLDMGSQ…ATKICGARPD (195 aa). Catalysis depends on cysteine 93, which acts as the Nucleophile. Residues histidine 185 and glutamate 187 contribute to the active site. The 209-residue stretch at 212-420 folds into the GMPS ATP-PPase domain; that stretch reads WKMDDFSARE…LGIHEELIGR (209 aa). 240-246 serves as a coordination point for ATP; it reads SGGVDST. XMP-binding residues include arginine 313, aspartate 482, lysine 537, and glutamate 543.

Homodimer. Requires Mg(2+) as cofactor.

It localises to the cytoplasm. Its subcellular location is the cytosol. It carries out the reaction XMP + L-glutamine + ATP + H2O = GMP + L-glutamate + AMP + diphosphate + 2 H(+). Its pathway is purine metabolism; GMP biosynthesis; GMP from XMP (L-Gln route): step 1/1. Its function is as follows. Catalyzes the conversion of xanthine monophosphate (XMP) to GMP in the presence of glutamine and ATP through an adenyl-XMP intermediate. The polypeptide is GMP synthase [glutamine-hydrolyzing] (GUA1) (Gibberella zeae (strain ATCC MYA-4620 / CBS 123657 / FGSC 9075 / NRRL 31084 / PH-1) (Wheat head blight fungus)).